The sequence spans 162 residues: Precorrin-2 dehydrogenase (162 aa).

Residues 20–21 (SI) and 41–42 (PD) contribute to the NAD(+) site.

This sequence belongs to the precorrin-2 dehydrogenase / sirohydrochlorin ferrochelatase family.

It carries out the reaction precorrin-2 + NAD(+) = sirohydrochlorin + NADH + 2 H(+). The protein operates within cofactor biosynthesis; adenosylcobalamin biosynthesis; sirohydrochlorin from precorrin-2: step 1/1. It participates in porphyrin-containing compound metabolism; siroheme biosynthesis; sirohydrochlorin from precorrin-2: step 1/1. Functionally, catalyzes the dehydrogenation of precorrin-2 to form sirohydrochlorin which is used as a precursor in both siroheme biosynthesis and in the anaerobic branch of adenosylcobalamin biosynthesis. In Bacillus subtilis (strain 168), this protein is Precorrin-2 dehydrogenase (sirC).